The sequence spans 99 residues: Nucleoid-associated protein Cj1642 (99 aa).

This sequence belongs to the YbaB/EbfC family. In terms of assembly, homodimer.

The protein localises to the cytoplasm. The protein resides in the nucleoid. Its function is as follows. Binds to DNA and alters its conformation. May be involved in regulation of gene expression, nucleoid organization and DNA protection. This Campylobacter jejuni subsp. jejuni serotype O:2 (strain ATCC 700819 / NCTC 11168) protein is Nucleoid-associated protein Cj1642.